A 106-amino-acid polypeptide reads, in one-letter code: Large ribosomal subunit protein uL24 (106 aa).

This sequence belongs to the universal ribosomal protein uL24 family. As to quaternary structure, part of the 50S ribosomal subunit.

One of two assembly initiator proteins, it binds directly to the 5'-end of the 23S rRNA, where it nucleates assembly of the 50S subunit. Its function is as follows. One of the proteins that surrounds the polypeptide exit tunnel on the outside of the subunit. In Syntrophus aciditrophicus (strain SB), this protein is Large ribosomal subunit protein uL24.